Here is a 111-residue protein sequence, read N- to C-terminus: Beta-2-microglobulin (111 aa).

The N-terminal stretch at 1–17 is a signal peptide; sequence MRALILLSLGLLRVAVP. In terms of domain architecture, Ig-like C1-type spans 20 to 111; it reads PQVVVYTYKP…KTSIYKLESF (92 aa).

It belongs to the beta-2-microglobulin family. In terms of assembly, heterodimer of an alpha chain and a beta chain. Beta-2-microglobulin is the beta-chain of major histocompatibility complex class I molecules.

The protein localises to the secreted. In terms of biological role, component of the class I major histocompatibility complex (MHC). Involved in the presentation of peptide antigens to the immune system. The polypeptide is Beta-2-microglobulin (b2m) (Rostroraja eglanteria (Clearnose skate)).